We begin with the raw amino-acid sequence, 49 residues long: MKSKIIAALLLILMIIISIYYSVTVPLMIPTIILGWSLLLLQVKYECIN.

This is an uncharacterized protein from Enterobacteria phage T4 (Bacteriophage T4).